The primary structure comprises 94 residues: Small ribosomal subunit protein bS18 (94 aa).

This sequence belongs to the bacterial ribosomal protein bS18 family. Part of the 30S ribosomal subunit. Forms a tight heterodimer with protein bS6.

In terms of biological role, binds as a heterodimer with protein bS6 to the central domain of the 16S rRNA, where it helps stabilize the platform of the 30S subunit. This chain is Small ribosomal subunit protein bS18, found in Leptothrix cholodnii (strain ATCC 51168 / LMG 8142 / SP-6) (Leptothrix discophora (strain SP-6)).